The sequence spans 332 residues: Probable class II chitinase ARB_00204 (332 aa).

Residues 1–18 (MKTPFTILAALTVATTLA) form the signal peptide. The GH18 domain occupies 19–331 (DVPDEWDIIE…NPHRKYLDSF (313 aa)). Glutamate 118 serves as the catalytic Proton donor. A glycan (N-linked (GlcNAc...) asparagine) is linked at asparagine 245.

This sequence belongs to the glycosyl hydrolase 18 family. Chitinase class II subfamily.

Its subcellular location is the secreted. It catalyses the reaction Random endo-hydrolysis of N-acetyl-beta-D-glucosaminide (1-&gt;4)-beta-linkages in chitin and chitodextrins.. Functionally, degrades chitin and chitotriose. The sequence is that of Probable class II chitinase ARB_00204 from Arthroderma benhamiae (strain ATCC MYA-4681 / CBS 112371) (Trichophyton mentagrophytes).